Consider the following 425-residue polypeptide: Monoacylglycerol lipase ABHD2 (425 aa).

Topologically, residues 1–9 (MNAMMETSE) are cytoplasmic. Residues 10-30 (LPAVFDGVKLAAVAAVLYVIV) traverse the membrane as a helical; Signal-anchor for type II membrane protein segment. At 31–425 (RCLNLKSPTA…DTELVEADLE (395 aa)) the chain is on the extracellular side. An AB hydrolase-1 domain is found at 128-382 (MVICPGIANH…HGGHLGFFEG (255 aa)). Asparagine 136 is a glycosylation site (N-linked (GlcNAc...) asparagine). Serine 207 functions as the Nucleophile in the catalytic mechanism. Active-site charge relay system residues include aspartate 345 and histidine 376. N-linked (GlcNAc...) asparagine glycosylation occurs at asparagine 410.

This sequence belongs to the AB hydrolase superfamily. AB hydrolase 4 family.

The protein resides in the cell membrane. The catalysed reaction is Hydrolyzes glycerol monoesters of long-chain fatty acids.. The enzyme catalyses an acetyl ester + H2O = an aliphatic alcohol + acetate + H(+). It carries out the reaction a triacylglycerol + H2O = a diacylglycerol + a fatty acid + H(+). It catalyses the reaction 2-(5Z,8Z,11Z,14Z-eicosatetraenoyl)-glycerol + H2O = glycerol + (5Z,8Z,11Z,14Z)-eicosatetraenoate + H(+). The catalysed reaction is a butanoate ester + H2O = an aliphatic alcohol + butanoate + H(+). The enzyme catalyses hexadecanoate ester + H2O = an aliphatic alcohol + hexadecanoate + H(+). Its activity is regulated as follows. Acylglycerol lipase activity is activated upon binding to progesterone. Functionally, progesterone-dependent acylglycerol lipase that catalyzes hydrolysis of endocannabinoid arachidonoylglycerol (AG) from cell membrane. Acts as a progesterone receptor: progesterone-binding activates the acylglycerol lipase activity, mediating degradation of 1-arachidonoylglycerol (1AG) and 2-arachidonoylglycerol (2AG) to glycerol and arachidonic acid (AA). Also displays an ester hydrolase activity against acetyl ester, butanoate ester and hexadecanoate ester. Plays a key role in sperm capacitation in response to progesterone by mediating degradation of 2AG, an inhibitor of the sperm calcium channel CatSper, leading to calcium influx via CatSper and sperm activation. May also play a role in smooth muscle cells migration. The sequence is that of Monoacylglycerol lipase ABHD2 (ABHD2) from Bos taurus (Bovine).